The sequence spans 129 residues: Small ribosomal subunit protein uS11 (129 aa).

This sequence belongs to the universal ribosomal protein uS11 family. In terms of assembly, part of the 30S ribosomal subunit. Interacts with proteins S7 and S18. Binds to IF-3.

In terms of biological role, located on the platform of the 30S subunit, it bridges several disparate RNA helices of the 16S rRNA. Forms part of the Shine-Dalgarno cleft in the 70S ribosome. This chain is Small ribosomal subunit protein uS11, found in Geobacillus sp. (strain WCH70).